The primary structure comprises 246 residues: ATP synthase subunit a (246 aa).

Positions 1-3 (MIY) are cleaved as a propeptide — removed in mature form. The next 7 membrane-spanning stretches (helical) occupy residues 25–45 (VNNYVMYVALVVTLMYSSVFL), 51–71 (LGFNRWGVALLAVYDTILNMV), 79–99 (GGMYFPFMFTLFTFMLVANLV), 112–132 (LVAIVSFSLSLWFGCVLMGLS), 138–158 (FFALFVPGGTPLALVPVLVLI), 178–198 (VLSGHLLMLILGTLMFNLMGS), and 203–223 (FMGGFMPVMGVIAIVVTEFAI).

Belongs to the ATPase A chain family. F-type ATPases have 2 components, CF(1) - the catalytic core - and CF(0) - the membrane proton channel. CF(1) has five subunits: alpha(3), beta(3), gamma(1), delta(1), epsilon(1). CF(0) has three main subunits: a, b and c.

The protein resides in the mitochondrion inner membrane. Its function is as follows. Mitochondrial membrane ATP synthase (F(1)F(0) ATP synthase or Complex V) produces ATP from ADP in the presence of a proton gradient across the membrane which is generated by electron transport complexes of the respiratory chain. F-type ATPases consist of two structural domains, F(1) - containing the extramembraneous catalytic core and F(0) - containing the membrane proton channel, linked together by a central stalk and a peripheral stalk. During catalysis, ATP synthesis in the catalytic domain of F(1) is coupled via a rotary mechanism of the central stalk subunits to proton translocation. Key component of the proton channel; it may play a direct role in the translocation of protons across the membrane. The sequence is that of ATP synthase subunit a (ATP6) from Debaryomyces hansenii (strain ATCC 36239 / CBS 767 / BCRC 21394 / JCM 1990 / NBRC 0083 / IGC 2968) (Yeast).